The sequence spans 297 residues: CASP-like protein 4A2 (297 aa).

Residues 1–136 (MKMKRTVSSN…MNGEESATTA (136 aa)) are disordered. Residues 1–149 (MKMKRTVSSN…ARRDDLVSVT (149 aa)) lie on the Cytoplasmic side of the membrane. A compositionally biased stretch (low complexity) spans 8 to 19 (SSNSEAYSYNES). The segment covering 69-83 (LPSPIPPPPPQIPPP) has biased composition (pro residues). Residues 93–121 (MNSSLDKSPSSMVVQNSWVREDGQQNTTR) are compositionally biased toward polar residues. A helical membrane pass occupies residues 150–170 (ALGFRITEVILCVISFSIMAA). At 171–189 (DKTQGWSGDSYDRYKEYRY) the chain is on the extracellular side. A helical transmembrane segment spans residues 190-210 (CLAVNVIAFVYSAFEACDAAC). Over 211–225 (YMAKESYMMNCGFHD) the chain is Cytoplasmic. A helical transmembrane segment spans residues 226–246 (LFVFSMDQLLAYLLMSASSCA). Residues 247-265 (ATRVDDWVSNWGKDEFTQM) lie on the Extracellular side of the membrane. A helical transmembrane segment spans residues 266–286 (ATASIAVSFLAFGAFAVSALI). The Cytoplasmic segment spans residues 287-297 (SSYRLFTHASS).

The protein belongs to the Casparian strip membrane proteins (CASP) family. In terms of assembly, homodimer and heterodimers.

The protein resides in the cell membrane. The sequence is that of CASP-like protein 4A2 from Arabidopsis lyrata subsp. lyrata (Lyre-leaved rock-cress).